We begin with the raw amino-acid sequence, 517 residues long: UDP-N-acetylmuramoylalanine--D-glutamate ligase (517 aa).

Residue 143 to 149 (GTNGKTT) coordinates ATP.

This sequence belongs to the MurCDEF family.

Its subcellular location is the cytoplasm. The catalysed reaction is UDP-N-acetyl-alpha-D-muramoyl-L-alanine + D-glutamate + ATP = UDP-N-acetyl-alpha-D-muramoyl-L-alanyl-D-glutamate + ADP + phosphate + H(+). It participates in cell wall biogenesis; peptidoglycan biosynthesis. Its function is as follows. Cell wall formation. Catalyzes the addition of glutamate to the nucleotide precursor UDP-N-acetylmuramoyl-L-alanine (UMA). This chain is UDP-N-acetylmuramoylalanine--D-glutamate ligase, found in Leifsonia xyli subsp. xyli (strain CTCB07).